The sequence spans 159 residues: uncharacterized protein (159 aa).

Residues 9 to 36 form a disordered region; the sequence is VTSGNKEKKKKRSSAGLTGHAPPAADSS.

This is an uncharacterized protein from Caenorhabditis elegans.